The following is a 163-amino-acid chain: Neurotrophin-3 (163 aa).

A signal peptide spans 1 to 3 (IQS). Positions 4–119 (TSMDQGILTE…VLNRTSRRKR (116 aa)) are excised as a propeptide. Residue Asn112 is glycosylated (N-linked (GlcNAc...) asparagine).

It belongs to the NGF-beta family.

Its subcellular location is the secreted. Its function is as follows. Seems to promote the survival of visceral and proprioceptive sensory neurons. The chain is Neurotrophin-3 (NTF3) from Chilabothrus striatus (Haitian boa constrictor).